The sequence spans 394 residues: Cobalt-precorrin-5B C(1)-methyltransferase (394 aa).

Belongs to the CbiD family.

The enzyme catalyses Co-precorrin-5B + S-adenosyl-L-methionine = Co-precorrin-6A + S-adenosyl-L-homocysteine. Its pathway is cofactor biosynthesis; adenosylcobalamin biosynthesis; cob(II)yrinate a,c-diamide from sirohydrochlorin (anaerobic route): step 6/10. Functionally, catalyzes the methylation of C-1 in cobalt-precorrin-5B to form cobalt-precorrin-6A. The polypeptide is Cobalt-precorrin-5B C(1)-methyltransferase (Clostridium beijerinckii (strain ATCC 51743 / NCIMB 8052) (Clostridium acetobutylicum)).